The following is an 892-amino-acid chain: Exo-beta-D-glucosaminidase (892 aa).

An N-terminal signal peptide occupies residues 1–18; sequence MLANAIAALLLGSGIASA. Positions 19-28 are excised as a propeptide; the sequence is AGHGSPLTSK. Residues asparagine 196, asparagine 336, and asparagine 440 are each glycosylated (N-linked (GlcNAc...) asparagine). Aspartate 464 functions as the Proton donor in the catalytic mechanism. Catalysis depends on glutamate 539, which acts as the Nucleophile. 4 N-linked (GlcNAc...) asparagine glycosylation sites follow: asparagine 557, asparagine 578, asparagine 689, and asparagine 825.

This sequence belongs to the glycosyl hydrolase 2 family. As to quaternary structure, monomer.

Its subcellular location is the secreted. The protein resides in the extracellular space. The catalysed reaction is Hydrolysis of chitosan or chitosan oligosaccharides to remove successive D-glucosamine residues from the non-reducing termini.. In terms of biological role, hydrolyzes chitosan and chitooligosaccharides with retention of anomeric configuration. Has no activity against beta-D-galactoside, beta-D-glucuronide, beta-D-mannoside, chitin, glycol chitosan, cellulose, N,N'-diacetylchitibiose and pNP-GlcNAc. The protein is Exo-beta-D-glucosaminidase of Hypocrea jecorina (Trichoderma reesei).